The following is a 294-amino-acid chain: Phosphatidylglycerol--prolipoprotein diacylglyceryl transferase (294 aa).

Helical transmembrane passes span 19 to 39 (VFGF…GIVL), 69 to 89 (LLTW…VFFY), 101 to 121 (ILAV…VIAA), 139 to 159 (IMAL…FINA), 195 to 215 (QLYE…WLVW), 224 to 244 (GYVA…VEFF), and 267 to 287 (WGLT…IWLI). An a 1,2-diacyl-sn-glycero-3-phospho-(1'-sn-glycerol)-binding site is contributed by arginine 152.

Belongs to the Lgt family.

Its subcellular location is the cell inner membrane. It carries out the reaction L-cysteinyl-[prolipoprotein] + a 1,2-diacyl-sn-glycero-3-phospho-(1'-sn-glycerol) = an S-1,2-diacyl-sn-glyceryl-L-cysteinyl-[prolipoprotein] + sn-glycerol 1-phosphate + H(+). It participates in protein modification; lipoprotein biosynthesis (diacylglyceryl transfer). Its function is as follows. Catalyzes the transfer of the diacylglyceryl group from phosphatidylglycerol to the sulfhydryl group of the N-terminal cysteine of a prolipoprotein, the first step in the formation of mature lipoproteins. The protein is Phosphatidylglycerol--prolipoprotein diacylglyceryl transferase of Roseobacter denitrificans (strain ATCC 33942 / OCh 114) (Erythrobacter sp. (strain OCh 114)).